The primary structure comprises 156 residues: Small ribosomal subunit protein uS7 (156 aa).

This sequence belongs to the universal ribosomal protein uS7 family. Part of the 30S ribosomal subunit. Contacts proteins S9 and S11.

Its function is as follows. One of the primary rRNA binding proteins, it binds directly to 16S rRNA where it nucleates assembly of the head domain of the 30S subunit. Is located at the subunit interface close to the decoding center, probably blocks exit of the E-site tRNA. The polypeptide is Small ribosomal subunit protein uS7 (Pectobacterium atrosepticum (strain SCRI 1043 / ATCC BAA-672) (Erwinia carotovora subsp. atroseptica)).